A 148-amino-acid chain; its full sequence is Ribonuclease P protein component (148 aa).

The interval 119-148 (PLPAAPGTMPPARAPRPSSLSPTEPDPRSD) is disordered.

Belongs to the RnpA family. As to quaternary structure, consists of a catalytic RNA component (M1 or rnpB) and a protein subunit.

It carries out the reaction Endonucleolytic cleavage of RNA, removing 5'-extranucleotides from tRNA precursor.. Functionally, RNaseP catalyzes the removal of the 5'-leader sequence from pre-tRNA to produce the mature 5'-terminus. It can also cleave other RNA substrates such as 4.5S RNA. The protein component plays an auxiliary but essential role in vivo by binding to the 5'-leader sequence and broadening the substrate specificity of the ribozyme. The protein is Ribonuclease P protein component of Xanthomonas campestris pv. campestris (strain 8004).